Here is a 159-residue protein sequence, read N- to C-terminus: uncharacterized protein (159 aa).

Residues 1–20 (MKKIIAMSLLMFSVVMSVNA) form the signal peptide.

This is an uncharacterized protein from Pasteurella multocida (strain Pm70).